A 285-amino-acid polypeptide reads, in one-letter code: tRNA pseudouridine synthase A (285 aa).

The Nucleophile role is filled by Asp-64. Substrate is bound at residue Tyr-125.

The protein belongs to the tRNA pseudouridine synthase TruA family. In terms of assembly, homodimer.

It catalyses the reaction uridine(38/39/40) in tRNA = pseudouridine(38/39/40) in tRNA. Functionally, formation of pseudouridine at positions 38, 39 and 40 in the anticodon stem and loop of transfer RNAs. This Streptomyces avermitilis (strain ATCC 31267 / DSM 46492 / JCM 5070 / NBRC 14893 / NCIMB 12804 / NRRL 8165 / MA-4680) protein is tRNA pseudouridine synthase A.